The primary structure comprises 424 residues: Neurotensin receptor type 1 (424 aa).

Residues 1-67 lie on the Extracellular side of the membrane; it reads MHLNSSVQQG…TDIYSKVLVT (67 aa). Residues asparagine 4, asparagine 38, and asparagine 42 are each glycosylated (N-linked (GlcNAc...) asparagine). The helical transmembrane segment at 68–88 threads the bilayer; sequence AVYLALFVVGTVGNSVTAFTL. Residues 89 to 102 lie on the Cytoplasmic side of the membrane; the sequence is ARKKSLQSLQSTVH. Residues 103–122 form a helical membrane-spanning segment; the sequence is YHLGSLALSDLLILLLAMPV. The Extracellular segment spans residues 123–142; that stretch reads ELYNFIWVHHPWAFGDAGCR. The cysteines at positions 141 and 224 are disulfide-linked. Residues 143-164 traverse the membrane as a helical segment; the sequence is GYYFLRDACTYATALNVASLSV. At 165–184 the chain is on the cytoplasmic side; the sequence is ERYLAICHPFKAKTLMSRSR. The helical transmembrane segment at 185-205 threads the bilayer; the sequence is TKKFISAIWLASALLAVPMLF. The Extracellular segment spans residues 206–234; it reads TMGLQNRSADGQHPGGLVCTPTVDTATVK. An N-linked (GlcNAc...) asparagine glycan is attached at asparagine 211. A helical transmembrane segment spans residues 235–259; the sequence is VVIQVNTFMSFLFPMLIISILNTVI. Topologically, residues 260–308 are cytoplasmic; that stretch reads ANKLTVMVHQAAEQGRGVCTVGTHNSLEHSTFNMSIEPGRVQALRHGVL. The helical transmembrane segment at 309–330 threads the bilayer; sequence VLRAVVIAFVVCWLPYHVRRLM. The interval 326–349 is neurotensin binding; sequence VRRLMFCYISDEQWTTFLFDFYHY. At 331–348 the chain is on the extracellular side; it reads FCYISDEQWTTFLFDFYH. The helical transmembrane segment at 349–369 threads the bilayer; that stretch reads YFYMLTNALFYVSSAINPILY. Topologically, residues 370–424 are cytoplasmic; sequence NLVSANFRQVFLSTLACLCPGWRRRRKKRPTFSRKPNSMSSNHAFSTSATRETLY. 2 S-palmitoyl cysteine lipidation sites follow: cysteine 386 and cysteine 388. Positions 398–424 are disordered; that stretch reads RPTFSRKPNSMSSNHAFSTSATRETLY. Residues 403-424 are compositionally biased toward polar residues; it reads RKPNSMSSNHAFSTSATRETLY.

Belongs to the G-protein coupled receptor 1 family. Neurotensin receptor subfamily. NTSR1 sub-subfamily. As to quaternary structure, interacts (palmitoylated form) with GNA11. Post-translationally, N-glycosylated. In terms of processing, palmitoylated; this is required for normal localization at membrane rafts and normal GNA11-mediated activation of down-stream signaling cascades. The palmitoylation level increases in response to neurotensin treatment.

The protein resides in the cell membrane. It is found in the membrane raft. Functionally, G-protein coupled receptor for the tridecapeptide neurotensin (NTS). Signaling is effected via G proteins that activate a phosphatidylinositol-calcium second messenger system. Signaling leads to the activation of downstream MAP kinases and protects cells against apoptosis. This Mus musculus (Mouse) protein is Neurotensin receptor type 1 (Ntsr1).